The following is a 315-amino-acid chain: Prephenate dehydratase (315 aa).

The 187-residue stretch at 3 to 189 (RIAYLGPEGT…ARTRFLLIGV (187 aa)) folds into the Prephenate dehydratase domain. The region spanning 203–280 (SVVLRIANVP…ADVRYLGSWP (78 aa)) is the ACT domain.

In terms of assembly, homodimer.

It catalyses the reaction prephenate + H(+) = 3-phenylpyruvate + CO2 + H2O. It functions in the pathway amino-acid biosynthesis; L-phenylalanine biosynthesis; phenylpyruvate from prephenate: step 1/1. The chain is Prephenate dehydratase (pheA) from Mycobacterium marinum (strain ATCC BAA-535 / M).